The primary structure comprises 235 residues: AA9 family lytic polysaccharide monooxygenase D (235 aa).

Residues 1–18 (MKAFFAVLAVVSAPFVLG) form the signal peptide. A Cu(2+)-binding site is contributed by His-19. Ser-29 carries O-linked (Man...) serine glycosylation. Cys-61 and Cys-181 form a disulfide bridge. A Cu(2+)-binding site is contributed by His-94. O2 is bound by residues His-167 and Gln-176. A Cu(2+)-binding site is contributed by Tyr-178. The N-linked (GlcNAc...) asparagine glycan is linked to Asn-221.

It belongs to the polysaccharide monooxygenase AA9 family. The cofactor is Cu(2+).

The protein localises to the secreted. The enzyme catalyses [(1-&gt;4)-beta-D-glucosyl]n+m + reduced acceptor + O2 = 4-dehydro-beta-D-glucosyl-[(1-&gt;4)-beta-D-glucosyl]n-1 + [(1-&gt;4)-beta-D-glucosyl]m + acceptor + H2O.. Lytic polysaccharide monooxygenase (LPMO) that depolymerizes crystalline and amorphous polysaccharides via the oxidation of scissile alpha- or beta-(1-4)-glycosidic bonds, yielding only C1 oxidation products. Catalysis by LPMOs requires the reduction of the active-site copper from Cu(II) to Cu(I) by a reducing agent and H(2)O(2) or O(2) as a cosubstrate. This Phanerodontia chrysosporium (White-rot fungus) protein is AA9 family lytic polysaccharide monooxygenase D.